The sequence spans 63 residues: Large ribosomal subunit protein uL29 (63 aa).

Belongs to the universal ribosomal protein uL29 family.

The polypeptide is Large ribosomal subunit protein uL29 (Shewanella halifaxensis (strain HAW-EB4)).